Here is a 144-residue protein sequence, read N- to C-terminus: L-fucose mutarotase (144 aa).

H22 acts as the Proton donor in catalysis. Substrate is bound by residues D30, R109, and 131 to 133; that span reads YGN.

The protein belongs to the RbsD / FucU family. FucU mutarotase subfamily. As to quaternary structure, homodecamer.

It localises to the cytoplasm. It carries out the reaction alpha-L-fucose = beta-L-fucose. Its pathway is carbohydrate metabolism; L-fucose metabolism. Functionally, involved in the anomeric conversion of L-fucose. The protein is L-fucose mutarotase of Actinobacillus pleuropneumoniae serotype 5b (strain L20).